The sequence spans 1124 residues: uncharacterized protein (1124 aa).

An N-terminal signal peptide occupies residues 1 to 28; it reads MALFPRSILIALVLSFVLNLGLVTKIHA. Helical transmembrane passes span 332 to 352, 359 to 379, 393 to 413, 495 to 515, 522 to 542, 555 to 575, and 700 to 720; these read IVTA…LLAG, EYIN…GINI, MIQW…SWVM, MLVS…AFMV, MISI…FLFA, MISF…MFAV, and IKNI…MYNF.

It belongs to the TrbL/VirB6 family.

The protein localises to the cell membrane. This is an uncharacterized protein from Rickettsia prowazekii (strain Madrid E).